A 453-amino-acid polypeptide reads, in one-letter code: Ribosomal protein uS12 methylthiotransferase RimO (453 aa).

The MTTase N-terminal domain occupies 5 to 120 (PKVGFVSLGC…VMQAVHSHLP (116 aa)). [4Fe-4S] cluster is bound by residues C14, C50, C79, C151, C155, and C158. Residues 137–382 (LTPRHYAYLK…MEVAEEVSAN (246 aa)) form the Radical SAM core domain. The TRAM domain occupies 385–453 (QRKVGKTLKV…ADGHDLWGEV (69 aa)).

It belongs to the methylthiotransferase family. RimO subfamily. [4Fe-4S] cluster serves as cofactor.

The protein localises to the cytoplasm. The enzyme catalyses L-aspartate(89)-[ribosomal protein uS12]-hydrogen + (sulfur carrier)-SH + AH2 + 2 S-adenosyl-L-methionine = 3-methylsulfanyl-L-aspartate(89)-[ribosomal protein uS12]-hydrogen + (sulfur carrier)-H + 5'-deoxyadenosine + L-methionine + A + S-adenosyl-L-homocysteine + 2 H(+). Functionally, catalyzes the methylthiolation of an aspartic acid residue of ribosomal protein uS12. The chain is Ribosomal protein uS12 methylthiotransferase RimO from Burkholderia cenocepacia (strain HI2424).